Here is a 321-residue protein sequence, read N- to C-terminus: uncharacterized protein (321 aa).

Residues 1 to 12 show a composition bias toward basic and acidic residues; that stretch reads MQGGREVGRESV. The interval 1–85 is disordered; it reads MQGGREVGRE…GWGEFEGFQE (85 aa). Over residues 53-67 the composition is skewed to polar residues; the sequence is NANSSRLDEGLSSSR.

This is an uncharacterized protein from Rattus norvegicus (Rat).